The chain runs to 198 residues: Recombination protein RecR (198 aa).

The segment at 57-72 (CLNCGCLTDEAACYFC) adopts a C4-type zinc-finger fold. A Toprim domain is found at 80–175 (QIICVTAFPR…QISRLAFGLP (96 aa)).

This sequence belongs to the RecR family.

Its function is as follows. May play a role in DNA repair. It seems to be involved in an RecBC-independent recombinational process of DNA repair. It may act with RecF and RecO. The protein is Recombination protein RecR of Protochlamydia amoebophila (strain UWE25).